Here is a 355-residue protein sequence, read N- to C-terminus: S-adenosylmethionine:tRNA ribosyltransferase-isomerase (355 aa).

The protein belongs to the QueA family. As to quaternary structure, monomer.

It localises to the cytoplasm. The catalysed reaction is 7-aminomethyl-7-carbaguanosine(34) in tRNA + S-adenosyl-L-methionine = epoxyqueuosine(34) in tRNA + adenine + L-methionine + 2 H(+). Its pathway is tRNA modification; tRNA-queuosine biosynthesis. Functionally, transfers and isomerizes the ribose moiety from AdoMet to the 7-aminomethyl group of 7-deazaguanine (preQ1-tRNA) to give epoxyqueuosine (oQ-tRNA). The sequence is that of S-adenosylmethionine:tRNA ribosyltransferase-isomerase from Burkholderia cenocepacia (strain ATCC BAA-245 / DSM 16553 / LMG 16656 / NCTC 13227 / J2315 / CF5610) (Burkholderia cepacia (strain J2315)).